A 111-amino-acid polypeptide reads, in one-letter code: Large ribosomal subunit protein P2w (111 aa).

Residues 63–111 (ASVPSGGGVAVSAAPSSGGGGAAAPAEKKEAKKEEKEESDDDMGFSLFE) form a disordered region. Residues 88 to 98 (AEKKEAKKEEK) show a composition bias toward basic and acidic residues. Residue Ser101 is modified to Phosphoserine.

It belongs to the eukaryotic ribosomal protein P1/P2 family. As to quaternary structure, P1 and P2 exist as dimers at the large ribosomal subunit.

Functionally, plays an important role in the elongation step of protein synthesis. This Arabidopsis thaliana (Mouse-ear cress) protein is Large ribosomal subunit protein P2w (RPP2D).